The sequence spans 276 residues: uncharacterized protein (276 aa).

Positions 1-4 (MNRG) are cleaved as a propeptide — leader sequence. Position 5 is an N-methylmethionine (Met-5). A helical transmembrane segment spans residues 5–26 (MTLIELLVALALSIILSLGLYY).

Its subcellular location is the membrane. This is an uncharacterized protein from Aquifex aeolicus (strain VF5).